A 109-amino-acid polypeptide reads, in one-letter code: Large ribosomal subunit protein P1A (109 aa).

Residues 69-84 show a composition bias toward low complexity; that stretch reads APVAGGAAAPAAADGE. Positions 69–109 are disordered; it reads APVAGGAAAPAAADGEAPAEEKEEAKEEEESDEDMGFGLFD. The segment covering 94–103 has biased composition (acidic residues); the sequence is KEEEESDEDM.

This sequence belongs to the eukaryotic ribosomal protein P1/P2 family. As to quaternary structure, component of the large ribosomal subunit (LSU). Mature yeast ribosomes consist of a small (40S) and a large (60S) subunit. The 40S small subunit contains 1 molecule of ribosomal RNA (18S rRNA) and at least 33 different proteins. The large 60S subunit contains 3 rRNA molecules (25S, 5.8S and 5S rRNA) and at least 46 different proteins. The acidic ribosomal P-proteins form the stalk structure of the 60S subunit. They are organized as a pentameric complex in which uL10/P0 interacts with 2 heterodimers of P1 and P2 proteins.

It localises to the cytoplasm. Its function is as follows. Component of the ribosome, a large ribonucleoprotein complex responsible for the synthesis of proteins in the cell. The small ribosomal subunit (SSU) binds messenger RNAs (mRNAs) and translates the encoded message by selecting cognate aminoacyl-transfer RNA (tRNA) molecules. The large subunit (LSU) contains the ribosomal catalytic site termed the peptidyl transferase center (PTC), which catalyzes the formation of peptide bonds, thereby polymerizing the amino acids delivered by tRNAs into a polypeptide chain. The nascent polypeptides leave the ribosome through a tunnel in the LSU and interact with protein factors that function in enzymatic processing, targeting, and the membrane insertion of nascent chains at the exit of the ribosomal tunnel. This Schizosaccharomyces pombe (strain 972 / ATCC 24843) (Fission yeast) protein is Large ribosomal subunit protein P1A (rpp101).